The primary structure comprises 295 residues: NADPH-dependent reductive aminase (295 aa).

The N-terminal stretch at 1–18 (MSKHIGIFGLGAMGTALA) is a signal peptide. Position 6–20 (6–20 (GIFGLGAMGTALAAK)) interacts with NADP(+).

Belongs to the HIBADH-related family. As to quaternary structure, homodimer. Requires NADPH as cofactor.

In terms of biological role, NADPH-dependent reductive aminase that catalyzes the reductive coupling of a broad set of carbonyl compounds with a variety of primary and secondary amines. Possesses remarkably high activity for the reductive amination of ketones and amines, often with high stereoselectivity and in some cases with ketone:amine ratios as low as 1:1. The cofactor NADPH, the carbonyl compound and the amine are added to the enzyme in that sequence, followed by the release of product, NADP(+) being released at last. RedAm is also able to act in the reverse, oxidative direction and exhibits activity in the dehydrogenation of amines to yield imines. The highest activity is found for 1-methyl-tetrahydroquinoline and acyclic amines are also found to be transformed. This chain is NADPH-dependent reductive aminase, found in Aspergillus oryzae (strain ATCC 42149 / RIB 40) (Yellow koji mold).